The primary structure comprises 557 residues: Probable protein kinase UbiB (557 aa).

The Protein kinase domain occupies 121-509; sequence AFDTTPLASA…RKLQTRVVTA (389 aa). ATP contacts are provided by residues 127-135 and K154; that span reads LASASIAQV. Catalysis depends on D289, which acts as the Proton acceptor. Transmembrane regions (helical) follow at residues 506 to 526 and 535 to 555; these read VVTA…YGLH and VPVW…IAWL.

The protein belongs to the ABC1 family. UbiB subfamily.

It localises to the cell inner membrane. The protein operates within cofactor biosynthesis; ubiquinone biosynthesis [regulation]. In terms of biological role, is probably a protein kinase regulator of UbiI activity which is involved in aerobic coenzyme Q (ubiquinone) biosynthesis. The sequence is that of Probable protein kinase UbiB from Xanthomonas campestris pv. campestris (strain 8004).